Consider the following 180-residue polypeptide: RNA polymerase sigma-E factor (180 aa).

The Polymerase core binding signature appears at 36–49 (DLLQTALARTYGRW). The segment at residues 130 to 149 (TEETAAALGMSAGTVKSTLH) is a DNA-binding region (H-T-H motif).

Belongs to the sigma-70 factor family. ECF subfamily.

It is found in the cytoplasm. Its function is as follows. Sigma factors are initiation factors that promote the attachment of RNA polymerase to specific initiation sites and are then released. This sigma factor is required for the synthesis of the antibiotic actinomycin. This chain is RNA polymerase sigma-E factor (sigE), found in Streptomyces antibioticus.